The following is a 219-amino-acid chain: MNNLRPALGIFGGTFDPVHYGHTESVIVAAQQAGVQSVAMLPCHIPVHKNHAPSDSHHRLAMLKLAIEQYPQLYIDEREIHSDTPSYTIHTLRALRKEYPKHPLCFFIGMDSLHSLLSWNEWQALFDYCHFVVCCRPGTKTPLSEELKALLVERQVATNNALHNALHGKIFLADTPELDISSSEIRRRIINNLPTDDMLAPKVRRYIQTHKLYQPSTTF.

Belongs to the NadD family.

It catalyses the reaction nicotinate beta-D-ribonucleotide + ATP + H(+) = deamido-NAD(+) + diphosphate. The protein operates within cofactor biosynthesis; NAD(+) biosynthesis; deamido-NAD(+) from nicotinate D-ribonucleotide: step 1/1. In terms of biological role, catalyzes the reversible adenylation of nicotinate mononucleotide (NaMN) to nicotinic acid adenine dinucleotide (NaAD). This chain is Probable nicotinate-nucleotide adenylyltransferase, found in Pseudoalteromonas atlantica (strain T6c / ATCC BAA-1087).